Here is a 443-residue protein sequence, read N- to C-terminus: ATP-dependent protease ATPase subunit HslU (443 aa).

ATP is bound by residues isoleucine 19, 61 to 66 (GVGKTE), aspartate 256, glutamate 321, and arginine 393.

It belongs to the ClpX chaperone family. HslU subfamily. A double ring-shaped homohexamer of HslV is capped on each side by a ring-shaped HslU homohexamer. The assembly of the HslU/HslV complex is dependent on binding of ATP.

Its subcellular location is the cytoplasm. ATPase subunit of a proteasome-like degradation complex; this subunit has chaperone activity. The binding of ATP and its subsequent hydrolysis by HslU are essential for unfolding of protein substrates subsequently hydrolyzed by HslV. HslU recognizes the N-terminal part of its protein substrates and unfolds these before they are guided to HslV for hydrolysis. In Ralstonia nicotianae (strain ATCC BAA-1114 / GMI1000) (Ralstonia solanacearum), this protein is ATP-dependent protease ATPase subunit HslU.